The following is a 382-amino-acid chain: MSNRHLPIGTRDEFGPRAIRKENLIQTISQQFIQAGFERVKTPLLEYRDVFKPLAVSGEQPYQMLDDAGESVVMRPDLTLPLARLLSTTSIVPPVQWWYVGDIFRVKKSLSGTYNQITQAGIELIGYRSLKAEWACLSEAGKICRTLGLTHLTLELSDAQFVPQILRTLQLNDAAADAFQTAFFAKELSTYQDLIAPLATNPLYPFLQQWPWLFGDSETIFAELKRLLPSNVITDRLAPLQQTVAFLKGQFPELRVTIDLTSRPPQSYYTGIFFHAYVDGGHQYLFSGGRYDKLLASFQQELLPAVGLAFDIDAVTDQLPNAPDQPLTFVYGLPSQWQAAAAMVATTPNARLCLVDTLAEAQAAATKQHANLIDLSPKEAIL.

This sequence belongs to the class-II aminoacyl-tRNA synthetase family. HisZ subfamily. Heteromultimer composed of HisG and HisZ subunits.

It is found in the cytoplasm. The protein operates within amino-acid biosynthesis; L-histidine biosynthesis; L-histidine from 5-phospho-alpha-D-ribose 1-diphosphate: step 1/9. In terms of biological role, required for the first step of histidine biosynthesis. May allow the feedback regulation of ATP phosphoribosyltransferase activity by histidine. The sequence is that of ATP phosphoribosyltransferase regulatory subunit from Lacticaseibacillus paracasei (strain ATCC 334 / BCRC 17002 / CCUG 31169 / CIP 107868 / KCTC 3260 / NRRL B-441) (Lactobacillus paracasei).